The primary structure comprises 418 residues: Probable mitochondrial adenine nucleotide transporter BTL2 (418 aa).

3 Solcar repeats span residues 122 to 205 (MNTR…YRKQ), 215 to 300 (ATNF…LKSS), and 329 to 414 (LGPI…MKIV). Helical transmembrane passes span 127 to 147 (HLWA…PLER), 180 to 200 (GNLL…CAYD), 221 to 241 (FVAG…LDTI), 276 to 296 (LVPS…VYDI), 335 to 355 (LMYG…FEVV), and 383 to 403 (IPAL…SASI).

It belongs to the mitochondrial carrier (TC 2.A.29) family.

The protein resides in the mitochondrion inner membrane. Probable mitochondrial adenylate carrier that catalyzes the transport of ATP, ADP and AMP. The protein is Probable mitochondrial adenine nucleotide transporter BTL2 of Arabidopsis thaliana (Mouse-ear cress).